The primary structure comprises 666 residues: tRNA 5-methylaminomethyl-2-thiouridine biosynthesis bifunctional protein MnmC (666 aa).

The tRNA (mnm(5)s(2)U34)-methyltransferase stretch occupies residues methionine 1–glutamate 253. The FAD-dependent cmnm(5)s(2)U34 oxidoreductase stretch occupies residues valine 283–proline 666.

The protein in the N-terminal section; belongs to the methyltransferase superfamily. tRNA (mnm(5)s(2)U34)-methyltransferase family. This sequence in the C-terminal section; belongs to the DAO family. It depends on FAD as a cofactor.

The protein localises to the cytoplasm. It catalyses the reaction 5-aminomethyl-2-thiouridine(34) in tRNA + S-adenosyl-L-methionine = 5-methylaminomethyl-2-thiouridine(34) in tRNA + S-adenosyl-L-homocysteine + H(+). In terms of biological role, catalyzes the last two steps in the biosynthesis of 5-methylaminomethyl-2-thiouridine (mnm(5)s(2)U) at the wobble position (U34) in tRNA. Catalyzes the FAD-dependent demodification of cmnm(5)s(2)U34 to nm(5)s(2)U34, followed by the transfer of a methyl group from S-adenosyl-L-methionine to nm(5)s(2)U34, to form mnm(5)s(2)U34. This chain is tRNA 5-methylaminomethyl-2-thiouridine biosynthesis bifunctional protein MnmC, found in Legionella pneumophila (strain Lens).